We begin with the raw amino-acid sequence, 424 residues long: UDP-N-acetylglucosamine 1-carboxyvinyltransferase (424 aa).

22–23 (KN) is a phosphoenolpyruvate binding site. Residue Arg-93 coordinates UDP-N-acetyl-alpha-D-glucosamine. Cys-117 (proton donor) is an active-site residue. Cys-117 bears the 2-(S-cysteinyl)pyruvic acid O-phosphothioketal mark. UDP-N-acetyl-alpha-D-glucosamine is bound by residues 122–126 (RPVDL), 164–166 (SVG), Asp-307, and Ile-329.

Belongs to the EPSP synthase family. MurA subfamily.

The protein resides in the cytoplasm. The enzyme catalyses phosphoenolpyruvate + UDP-N-acetyl-alpha-D-glucosamine = UDP-N-acetyl-3-O-(1-carboxyvinyl)-alpha-D-glucosamine + phosphate. Its pathway is cell wall biogenesis; peptidoglycan biosynthesis. Cell wall formation. Adds enolpyruvyl to UDP-N-acetylglucosamine. The chain is UDP-N-acetylglucosamine 1-carboxyvinyltransferase from Haemophilus influenzae (strain ATCC 51907 / DSM 11121 / KW20 / Rd).